Here is a 435-residue protein sequence, read N- to C-terminus: MIGGLFIYNHKGEVLIYRVYRDDIGRNAVDAFRVNVIHARQQVRSPVTNIARTSFFHVKRSNIWLAAVTKQNVDAAMVFEFLYKMCDVMAAYFGKISEENIKNNFVLIYELLDEILDFGYPQNSETGALKTFITQQGIKSQHQTKEEQSQITSQVTGQIGWRREGIKYRRNELFLDVLESVNLLMSPQGQVLSAHVSGRVVMKSYLSGMPECKFGMNDKIVIEKQGKGTADETSKSGKQSIAIDDCTFHQCVRLSKSDSERSISFIPPDGEFELMRYRTTKDIILPFRVIPLVREVGRTKLEVKVVIKSNFKPSLLAQKIEVRIPTPLNTSGVQVICMKGKAKYKASENAIVWKIKRMAGMKESQISAEIELLPTNDKKKWARPPISMNFEVPFAPSGLKVRYLKVFEPKLNYSDHDVIKWVRYIGRSGIYETRC.

S45 carries the phosphoserine modification. T156 is subject to Phosphothreonine. One can recognise an MHD domain in the interval R170–R434. 3 residues coordinate a 1,2-diacyl-sn-glycero-3-phospho-(1D-myo-inositol-3,4,5-trisphosphate): K341, K345, and K354.

This sequence belongs to the adaptor complexes medium subunit family. Adaptor protein complex 2 (AP-2) is a heterotetramer composed of two large adaptins (alpha-type subunit AP2A1 or AP2A2 and beta-type subunit AP2B1), a medium adaptin (mu-type subunit AP2M1) and a small adaptin (sigma-type subunit AP2S1). Interacts with ATP6V1H and MEGF10. Interacts with EGFR. Interacts with PIP5K1C; tyrosine phosphorylation of PIP5K1C weakens the interaction. Interacts with KIAA0319; required for clathrin-mediated endocytosis of KIAA0319. Interacts with DVL2 (via DEP domain). Interacts with KCNQ1; mediates estrogen-induced internalization via clathrin-coated vesicles. Together with AP2A1 or AP2A2 and AP2B1, it interacts with ADAM10; this interaction facilitates ADAM10 endocytosis from the plasma membrane during long-term potentiation in hippocampal neurons. Probably interacts with ACE2 (via endocytic sorting signal motif); the interaction is inhibited by ACE2 phosphorylation. Interacts with RALBP1; the interaction is direct. Interacts with TMEM106B (via N-terminus). In terms of processing, phosphorylation at Thr-156 increases the affinity of the AP-2 complex for cargo membrane proteins during the initial stages of endocytosis.

It is found in the cell membrane. The protein resides in the membrane. The protein localises to the coated pit. Component of the adaptor protein complex 2 (AP-2). Adaptor protein complexes function in protein transport via transport vesicles in different membrane traffic pathways. Adaptor protein complexes are vesicle coat components and appear to be involved in cargo selection and vesicle formation. AP-2 is involved in clathrin-dependent endocytosis in which cargo proteins are incorporated into vesicles surrounded by clathrin (clathrin-coated vesicles, CCVs) which are destined for fusion with the early endosome. The clathrin lattice serves as a mechanical scaffold but is itself unable to bind directly to membrane components. Clathrin-associated adaptor protein (AP) complexes which can bind directly to both the clathrin lattice and to the lipid and protein components of membranes are considered to be the major clathrin adaptors contributing the CCV formation. AP-2 also serves as a cargo receptor to selectively sort the membrane proteins involved in receptor-mediated endocytosis. AP-2 seems to play a role in the recycling of synaptic vesicle membranes from the presynaptic surface. AP-2 recognizes Y-X-X-[FILMV] (Y-X-X-Phi) and [ED]-X-X-X-L-[LI] endocytosis signal motifs within the cytosolic tails of transmembrane cargo molecules. AP-2 may also play a role in maintaining normal post-endocytic trafficking through the ARF6-regulated, non-clathrin pathway. During long-term potentiation in hippocampal neurons, AP-2 is responsible for the endocytosis of ADAM10. The AP-2 mu subunit binds to transmembrane cargo proteins; it recognizes the Y-X-X-Phi motifs. The surface region interacting with to the Y-X-X-Phi motif is inaccessible in cytosolic AP-2, but becomes accessible through a conformational change following phosphorylation of AP-2 mu subunit at Thr-156 in membrane-associated AP-2. The membrane-specific phosphorylation event appears to involve assembled clathrin which activates the AP-2 mu kinase AAK1. Plays a role in endocytosis of frizzled family members upon Wnt signaling. The polypeptide is AP-2 complex subunit mu (AP2M1) (Pongo abelii (Sumatran orangutan)).